We begin with the raw amino-acid sequence, 514 residues long: Sugar transport protein 3 (514 aa).

Residues 1–19 (MVAEEARKEAMAKSVSGGK) are Cytoplasmic-facing. Helical transmembrane passes span 20 to 40 (ITYFVVASCVMAAMGGVIFGY), 87 to 107 (LLTSFTSSLYVSGLIATLLAS), 124 to 144 (VSFLAGAALGGSAQNVAMLII), 147 to 167 (LLLGVGVGFANQSVPLYLSEM), 174 to 194 (GAISNGFQLCIGIGFLSANVI), 207 to 227 (ISLATAAIPASILTLGSLFLP), 289 to 309 (LVMALVIPFFQQVTGINVVAF), 327 to 347 (MSTLVTGIVGTSSTLLSMLVV), 356 to 376 (FLIGGLQMLVSQVTIGVIVMV), 392 to 412 (VVVLVCVYVAGFGWSWGPLGW), 430 to 450 (VTVAVSFVFTFAVAQSAPPML), and 456 to 476 (GIFFFYGGWLVVMTVAVQLFL). The Cytoplasmic segment spans residues 477-514 (PETKNVPIEKVVGLWEKHWFWRRMTSKRDIQETTILSH).

The protein belongs to the major facilitator superfamily. Sugar transporter (TC 2.A.1.1) family.

It localises to the membrane. Its function is as follows. Mediates an active uptake of hexoses, probably by sugar/hydrogen symport. The chain is Sugar transport protein 3 (STP3) from Arabidopsis thaliana (Mouse-ear cress).